The following is a 137-amino-acid chain: Putative pre-16S rRNA nuclease (137 aa).

This sequence belongs to the YqgF nuclease family.

Its subcellular location is the cytoplasm. Could be a nuclease involved in processing of the 5'-end of pre-16S rRNA. The polypeptide is Putative pre-16S rRNA nuclease (Clostridium kluyveri (strain NBRC 12016)).